Reading from the N-terminus, the 143-residue chain is EKC/KEOPS complex subunit LAGE3 (143 aa).

Positions 1 to 57 (MRDADADAGGGADGGDGRGGHSCRGGVDTAAAPAGGAPPAHAPGPGRDAASAARGSR) are disordered. A compositionally biased stretch (low complexity) spans 30–55 (AAAPAGGAPPAHAPGPGRDAASAARG).

Belongs to the CTAG/PCC1 family. Component of the EKC/KEOPS complex composed of at least GON7, TP53RK, TPRKB, OSGEP and LAGE3; the whole complex dimerizes. As to expression, ubiquitous.

Its subcellular location is the cytoplasm. The protein localises to the nucleus. In terms of biological role, component of the EKC/KEOPS complex that is required for the formation of a threonylcarbamoyl group on adenosine at position 37 (t(6)A37) in tRNAs that read codons beginning with adenine. The complex is probably involved in the transfer of the threonylcarbamoyl moiety of threonylcarbamoyl-AMP (TC-AMP) to the N6 group of A37. LAGE3 functions as a dimerization module for the complex. The protein is EKC/KEOPS complex subunit LAGE3 of Homo sapiens (Human).